Consider the following 142-residue polypeptide: Large ribosomal subunit protein uL13 (142 aa).

This sequence belongs to the universal ribosomal protein uL13 family. In terms of assembly, part of the 50S ribosomal subunit.

In terms of biological role, this protein is one of the early assembly proteins of the 50S ribosomal subunit, although it is not seen to bind rRNA by itself. It is important during the early stages of 50S assembly. The chain is Large ribosomal subunit protein uL13 from Shewanella denitrificans (strain OS217 / ATCC BAA-1090 / DSM 15013).